Here is a 700-residue protein sequence, read N- to C-terminus: Interleukin-1 receptor accessory protein-like 1-B (700 aa).

An N-terminal signal peptide occupies residues 1 to 18 (MRSRVPLQILLYAAVIRS). The Extracellular portion of the chain corresponds to 19–357 (LKVVSKRGSV…QLSRRELMYT (339 aa)). The region spanning 32 to 134 (TDWSVDYLRY…YCMKVSMALT (103 aa)) is the Ig-like C2-type 1 domain. Cys53 and Cys118 are disulfide-bonded. Asn63, Asn122, Asn138, Asn213, Asn264, and Asn331 each carry an N-linked (GlcNAc...) asparagine glycan. 2 consecutive Ig-like C2-type domains span residues 143–232 (CYNS…TELT) and 242–350 (PKIL…IQLS). Cys164 and Cys216 are disulfide-bonded. Cys267 and Cys334 form a disulfide bridge. The helical transmembrane segment at 358 to 378 (VELAGGLGAILLMLIFLVSLY) threads the bilayer. Residues 379-700 (KCYRIELMLF…RETSISSVIW (322 aa)) lie on the Cytoplasmic side of the membrane. The region spanning 403 to 559 (KDYDAYVSYT…RFWKQLQYEM (157 aa)) is the TIR domain. Glu491 is an active-site residue. A required for synaptic vesicle accumulation during synaptogenesis region spans residues 564–700 (PEPKLSHEQV…RETSISSVIW (137 aa)).

Belongs to the interleukin-1 receptor family.

The protein resides in the cell membrane. Its subcellular location is the cytoplasm. The enzyme catalyses NAD(+) + H2O = ADP-D-ribose + nicotinamide + H(+). May regulate secretion and presynaptic differentiation through inhibition of the activity of N-type voltage-gated calcium channel. During presynaptic differentiation may regulate both synaptic vesicle accumulation in axon terminals and subsequent axon terminal remodeling. The chain is Interleukin-1 receptor accessory protein-like 1-B (il1rapl1b) from Danio rerio (Zebrafish).